Consider the following 129-residue polypeptide: LTEELRTFPINAQGDTAVLSLKEIKKGQQVFNAACAQCHALGVTRTNPDVNLSPEALALATPPRDNIAALVDYIKNPTTYDGFVEISELHPSLKSSDIFPKMRNISEDDLYNVAGYILLQPKVRGEQWG.

The heme c site is built by Cys35, Cys38, His39, and His90.

Belongs to the cytochrome c family. PsbV subfamily. As to quaternary structure, PSII is composed of 1 copy each of membrane proteins PsbA, PsbB, PsbC, PsbD, PsbE, PsbF, PsbH, PsbI, PsbJ, PsbK, PsbL, PsbM, PsbT, PsbX, PsbY, PsbZ, Psb30/Ycf12, peripheral proteins PsbO, CyanoQ (PsbQ), PsbU, PsbV and a large number of cofactors. It forms dimeric complexes. Homodimer in crystal structure. Requires heme c as cofactor.

The protein resides in the cellular thylakoid membrane. One of the extrinsic, lumenal subunits of photosystem II (PSII). PSII is a light-driven water plastoquinone oxidoreductase, using light energy to abstract electrons from H(2)O, generating a proton gradient subsequently used for ATP formation. The extrinsic proteins stabilize the structure of photosystem II oxygen-evolving complex (OEC), the ion environment of oxygen evolution and protect the OEC against heat-induced inactivation. Low-potential cytochrome c that plays a role in the OEC of PSII. The chain is Photosystem II extrinsic protein V from Limnospira maxima (Arthrospira maxima).